The primary structure comprises 360 residues: Peptide chain release factor 1 (360 aa).

Gln-235 carries the post-translational modification N5-methylglutamine. A compositionally biased stretch (basic and acidic residues) spans 291–308; that stretch reads ASERRNLLGTGDRSDRNR. Positions 291 to 312 are disordered; that stretch reads ASERRNLLGTGDRSDRNRTYNF.

Belongs to the prokaryotic/mitochondrial release factor family. In terms of processing, methylated by PrmC. Methylation increases the termination efficiency of RF1.

Its subcellular location is the cytoplasm. In terms of biological role, peptide chain release factor 1 directs the termination of translation in response to the peptide chain termination codons UAG and UAA. This is Peptide chain release factor 1 from Yersinia pseudotuberculosis serotype I (strain IP32953).